The primary structure comprises 188 residues: Tetratricopeptide repeat protein 36 (188 aa).

TPR repeat units follow at residues 50 to 83 (SKAL…LPER), 85 to 117 (SAYN…SGGR), and 122 to 155 (RQGF…GSPF).

It belongs to the TTC36 family.

In Bos taurus (Bovine), this protein is Tetratricopeptide repeat protein 36 (TTC36).